The following is a 28-amino-acid chain: uncharacterized protein (28 aa).

Residues 5 to 27 form a helical membrane-spanning segment; it reads SAFHACNIIFLPLVKCASATIML.

It localises to the membrane. This is an uncharacterized protein from Saccharomyces cerevisiae (strain ATCC 204508 / S288c) (Baker's yeast).